Consider the following 717-residue polypeptide: MEQTQTAEGTDLLIGDEKTNDLPFVQLFLEEIGCTQYLDSFIQCNLVTEEEIKYLDKDILIALGVNKIGDRLKILRKSKSFQRDKRIEQVNRLKNLMEKVSSLSTATLSMNSELIPEKHCVIFILNDGSAKKVNVNGCFNADSIKKRLIRRLPHELLATNSNGEVTKMVQDYDVFVLDYTKNVLHLLYDVELVTICHANDRVEKNRLIFVSKDQTPSDKAISTSKKLYLRTLSALSQVGPSSSNLLAQNKGISHNNAEGKLRIDNTEKDRIRQIFNQRPPSEFISTNLAGYFPHTDMKRLQKTMRESFRHSARLSIAQRRPLSAESNNIGDILLKHSNAVDMALLQGLDQTRLSSKLDTTKIPKLAHKRPEDNDAISNQLELLSVESGEEEDHDFFGEDSDIVSLPTKIATPKNWLKGACIGSGSFGSVYLGMNAHTGELMAVKQVEIKNNNIGVPTDNNKQANSDENNEQEEQQEKIEDVGAVSHPKTNQNIHRKMVDALQHEMNLLKELHHENIVTYYGASQEGGNLNIFLEYVPGGSVSSMLNNYGPFEESLITNFTRQILIGVAYLHKKNIIHRDIKGANILIDIKGCVKITDFGISKKLSPLNKKQNKRASLQGSVFWMSPEVVKQTATTAKADIWSTGCVVIEMFTGKHPFPDFSQMQAIFKIGTNTTPEIPSWATSEGKNFLRKAFELDYQYRPSALELLQHPWLDAHII.

The SAM domain occupies asparagine 20 to aspartate 84. Serine 323 carries the post-translational modification Phosphoserine. The region spanning tryptophan 415 to leucine 712 is the Protein kinase domain. ATP contacts are provided by residues isoleucine 421–valine 429 and lysine 444. Residues asparagine 452 to aspartate 466 show a composition bias toward polar residues. The tract at residues asparagine 452–valine 481 is disordered. Position 465 is a phosphoserine (serine 465). Aspartate 579 serves as the catalytic Proton acceptor.

It belongs to the protein kinase superfamily. STE Ser/Thr protein kinase family. MAP kinase kinase kinase subfamily. Homodimer. Interacts (via SAM domain) with STE50 (via SAM domain). Interacts with PBS2 and SHO1.

The enzyme catalyses L-seryl-[protein] + ATP = O-phospho-L-seryl-[protein] + ADP + H(+). It catalyses the reaction L-threonyl-[protein] + ATP = O-phospho-L-threonyl-[protein] + ADP + H(+). Its function is as follows. Serine/threonine protein kinase required for cell-type-specific transcription and signal transduction in yeast. It is thought that it phosphorylates the STE7 protein kinase which itself, phosphorylates the FUS3 and or KSS1 kinases. This chain is Serine/threonine-protein kinase STE11 (STE11), found in Saccharomyces cerevisiae (strain ATCC 204508 / S288c) (Baker's yeast).